Here is a 614-residue protein sequence, read N- to C-terminus: 1-deoxy-D-xylulose-5-phosphate synthase (614 aa).

Residues His74 and Gly115–Ser117 each bind thiamine diphosphate. Mg(2+) is bound at residue Asp146. Residues Gly147–Ala148, Asn175, Tyr282, and Glu363 each bind thiamine diphosphate. Position 175 (Asn175) interacts with Mg(2+).

It belongs to the transketolase family. DXPS subfamily. Homodimer. The cofactor is Mg(2+). Thiamine diphosphate is required as a cofactor.

The enzyme catalyses D-glyceraldehyde 3-phosphate + pyruvate + H(+) = 1-deoxy-D-xylulose 5-phosphate + CO2. It functions in the pathway metabolic intermediate biosynthesis; 1-deoxy-D-xylulose 5-phosphate biosynthesis; 1-deoxy-D-xylulose 5-phosphate from D-glyceraldehyde 3-phosphate and pyruvate: step 1/1. In terms of biological role, catalyzes the acyloin condensation reaction between C atoms 2 and 3 of pyruvate and glyceraldehyde 3-phosphate to yield 1-deoxy-D-xylulose-5-phosphate (DXP). In Methylobacillus flagellatus (strain ATCC 51484 / DSM 6875 / VKM B-1610 / KT), this protein is 1-deoxy-D-xylulose-5-phosphate synthase.